A 297-amino-acid polypeptide reads, in one-letter code: Phosphoribosylaminoimidazole-succinocarboxamide synthase (297 aa).

The protein belongs to the SAICAR synthetase family.

It carries out the reaction 5-amino-1-(5-phospho-D-ribosyl)imidazole-4-carboxylate + L-aspartate + ATP = (2S)-2-[5-amino-1-(5-phospho-beta-D-ribosyl)imidazole-4-carboxamido]succinate + ADP + phosphate + 2 H(+). It participates in purine metabolism; IMP biosynthesis via de novo pathway; 5-amino-1-(5-phospho-D-ribosyl)imidazole-4-carboxamide from 5-amino-1-(5-phospho-D-ribosyl)imidazole-4-carboxylate: step 1/2. The sequence is that of Phosphoribosylaminoimidazole-succinocarboxamide synthase from Corynebacterium glutamicum (strain R).